The chain runs to 268 residues: Regulatory protein zeste (268 aa).

The DNA-binding element occupies 1 to 72; sequence TAEEKEVLYT…WLNSRLRKQY (72 aa). A compositionally biased stretch (low complexity) spans 94–108; that stretch reads VSVASAVPQQQQQQH. A disordered region spans residues 94–133; the sequence is VSVASAVPQQQQQQHHQQHDNVKEEPEYQISPDASEHNPQ. A compositionally biased stretch (basic and acidic residues) spans 110–119; it reads QQHDNVKEEP.

In terms of assembly, self-associates forming complexes of several hundred monomers.

Its subcellular location is the nucleus. Its function is as follows. Involved in transvection phenomena (= synapsis-dependent gene expression), where the synaptic pairing of chromosomes carrying genes with which zeste interacts influences the expression of these genes. Zeste binds to DNA and stimulates transcription from a nearby promoter. This is Regulatory protein zeste (z) from Drosophila sechellia (Fruit fly).